The following is a 276-amino-acid chain: MGIKNLNSVTASLRGTVLLDKSMLWKGKPEKSLVSYKISRGGRNSRGVITVRHRGRGHKRLYRVVDFKRNKVGVSATVERLEYDPNRTAFIALLSYDDGEKSYIIAPNGLKKGDVVISGDGADILPGNCLLLKSIPVGTFVHNVELRPGNGGVIARSAGTYAQLMSKDGMYVLLRLSSGEIRKVLSDCRATIGIVSNLDNQNVKLGKAGRSRWLGIRPTVRGVAMNPIDHPHGGGEGKTSGGRNPVTPWGVPTKGKKTRKRNKSSNKYIKRVSDKG.

Residues 224–276 (AMNPIDHPHGGGEGKTSGGRNPVTPWGVPTKGKKTRKRNKSSNKYIKRVSDKG) form a disordered region. The span at 254–270 (KGKKTRKRNKSSNKYIK) shows a compositional bias: basic residues.

This sequence belongs to the universal ribosomal protein uL2 family. In terms of assembly, part of the 50S ribosomal subunit. Forms a bridge to the 30S subunit in the 70S ribosome.

One of the primary rRNA binding proteins. Required for association of the 30S and 50S subunits to form the 70S ribosome, for tRNA binding and peptide bond formation. It has been suggested to have peptidyltransferase activity; this is somewhat controversial. Makes several contacts with the 16S rRNA in the 70S ribosome. This chain is Large ribosomal subunit protein uL2, found in Ehrlichia chaffeensis (strain ATCC CRL-10679 / Arkansas).